The primary structure comprises 112 residues: T cell receptor alpha variable 21 (112 aa).

Residues 1–19 (METLLGLLILWLQLQWVSS) form the signal peptide. The region spanning 21-112 (QEVTQIPAAL…DSATYLCAVR (92 aa)) is the Ig-like domain. N-linked (GlcNAc...) asparagine glycosylation is found at asparagine 41 and asparagine 82. A disulfide bridge connects residues cysteine 42 and cysteine 109.

In terms of assembly, alpha-beta TR is a heterodimer composed of an alpha and beta chain; disulfide-linked. The alpha-beta TR is associated with the transmembrane signaling CD3 coreceptor proteins to form the TR-CD3 (TcR or TCR). The assembly of alpha-beta TR heterodimers with CD3 occurs in the endoplasmic reticulum where a single alpha-beta TR heterodimer associates with one CD3D-CD3E heterodimer, one CD3G-CD3E heterodimer and one CD247 homodimer forming a stable octameric structure. CD3D-CD3E and CD3G-CD3E heterodimers preferentially associate with TR alpha and TR beta chains, respectively. The association of the CD247 homodimer is the last step of TcR assembly in the endoplasmic reticulum and is required for transport to the cell surface.

The protein localises to the cell membrane. Its function is as follows. V region of the variable domain of T cell receptor (TR) alpha chain that participates in the antigen recognition. Alpha-beta T cell receptors are antigen specific receptors which are essential to the immune response and are present on the cell surface of T lymphocytes. Recognize peptide-major histocompatibility (MH) (pMH) complexes that are displayed by antigen presenting cells (APC), a prerequisite for efficient T cell adaptive immunity against pathogens. Binding of alpha-beta TR to pMH complex initiates TR-CD3 clustering on the cell surface and intracellular activation of LCK that phosphorylates the ITAM motifs of CD3G, CD3D, CD3E and CD247 enabling the recruitment of ZAP70. In turn ZAP70 phosphorylates LAT, which recruits numerous signaling molecules to form the LAT signalosome. The LAT signalosome propagates signal branching to three major signaling pathways, the calcium, the mitogen-activated protein kinase (MAPK) kinase and the nuclear factor NF-kappa-B (NF-kB) pathways, leading to the mobilization of transcription factors that are critical for gene expression and essential for T cell growth and differentiation. The T cell repertoire is generated in the thymus, by V-(D)-J rearrangement. This repertoire is then shaped by intrathymic selection events to generate a peripheral T cell pool of self-MH restricted, non-autoaggressive T cells. Post-thymic interaction of alpha-beta TR with the pMH complexes shapes TR structural and functional avidity. In Homo sapiens (Human), this protein is T cell receptor alpha variable 21.